A 433-amino-acid chain; its full sequence is Serine carboxypeptidase-like 8 (433 aa).

The first 19 residues, 1–19 (MSLKIKFLLLLVLYHHVDS), serve as a signal peptide directing secretion. 3 disulfides stabilise this stretch: cysteine 78/cysteine 323, cysteine 241/cysteine 255, and cysteine 279/cysteine 289. Residue asparagine 99 is glycosylated (N-linked (GlcNAc...) asparagine). The active site involves serine 173. N-linked (GlcNAc...) asparagine glycans are attached at residues asparagine 283, asparagine 324, and asparagine 342. Catalysis depends on residues aspartate 358 and histidine 411. N-linked (GlcNAc...) asparagine glycosylation is present at asparagine 418.

The protein belongs to the peptidase S10 family. In terms of processing, N-glycosylated. In terms of tissue distribution, highly expressed in seedlings. Expressed in leaves, stems, flowers and siliques, and at low levels in roots.

Its subcellular location is the vacuole. The catalysed reaction is 1-O-(trans-sinapoyl)-beta-D-glucose + (S)-malate = sinapoyl (S)-malate + D-glucose. It carries out the reaction 2 1-O-(trans-sinapoyl)-beta-D-glucose = 1,2-di-O-sinapoyl beta-D-glucose + D-glucose. Its activity is regulated as follows. 95% inhibition by diisopropyl fluorophosphate (DFP) and 30% by phenylmethylsulfonyl fluoride (PMSF). Functionally, involved in plants secondary metabolism. Functions as acyltransferase to form the sinapate ester sinapoylmalate. Also capable of catalyzing the formation of 1,2-bis-O-sinapoyl beta-D-glucoside. The chain is Serine carboxypeptidase-like 8 from Arabidopsis thaliana (Mouse-ear cress).